Here is a 137-residue protein sequence, read N- to C-terminus: Large ribosomal subunit protein uL16 (137 aa).

The span at 1–17 (MLQPKRTKFRKTHKGRN) shows a compositional bias: basic residues. The interval 1 to 23 (MLQPKRTKFRKTHKGRNRGLAQN) is disordered.

Belongs to the universal ribosomal protein uL16 family. In terms of assembly, part of the 50S ribosomal subunit.

Binds 23S rRNA and is also seen to make contacts with the A and possibly P site tRNAs. This Pseudoalteromonas translucida (strain TAC 125) protein is Large ribosomal subunit protein uL16.